Here is a 285-residue protein sequence, read N- to C-terminus: Bifunctional protein FolD (285 aa).

NADP(+) contacts are provided by residues 166–168 (GAS) and Ile232.

Belongs to the tetrahydrofolate dehydrogenase/cyclohydrolase family. In terms of assembly, homodimer.

It carries out the reaction (6R)-5,10-methylene-5,6,7,8-tetrahydrofolate + NADP(+) = (6R)-5,10-methenyltetrahydrofolate + NADPH. It catalyses the reaction (6R)-5,10-methenyltetrahydrofolate + H2O = (6R)-10-formyltetrahydrofolate + H(+). The protein operates within one-carbon metabolism; tetrahydrofolate interconversion. Functionally, catalyzes the oxidation of 5,10-methylenetetrahydrofolate to 5,10-methenyltetrahydrofolate and then the hydrolysis of 5,10-methenyltetrahydrofolate to 10-formyltetrahydrofolate. The chain is Bifunctional protein FolD from Pseudoalteromonas atlantica (strain T6c / ATCC BAA-1087).